Here is a 511-residue protein sequence, read N- to C-terminus: ATP synthase subunit alpha, plastid (511 aa).

Residue 170–177 (GDRQTGKT) participates in ATP binding.

It belongs to the ATPase alpha/beta chains family. In terms of assembly, F-type ATPases have 2 components, CF(1) - the catalytic core - and CF(0) - the membrane proton channel. CF(1) has five subunits: alpha(3), beta(3), gamma(1), delta(1), epsilon(1). CF(0) has four main subunits: a, b, b' and c.

It localises to the plastid membrane. It carries out the reaction ATP + H2O + 4 H(+)(in) = ADP + phosphate + 5 H(+)(out). In terms of biological role, produces ATP from ADP in the presence of a proton gradient across the membrane. The alpha chain is a regulatory subunit. This Cuscuta reflexa (Southern Asian dodder) protein is ATP synthase subunit alpha, plastid.